The primary structure comprises 180 residues: Trafficking protein particle complex subunit 3 (180 aa).

Cys-68 carries the S-palmitoyl cysteine lipid modification.

This sequence belongs to the TRAPP small subunits family. BET3 subfamily. Homodimer. Component of the multisubunit transport protein particle (TRAPP) complex, which includes at least TRAPPC2, TRAPPC2L, TRAPPC3, TRAPPC3L, TRAPPC4, TRAPPC5, TRAPPC8, TRAPPC9, TRAPPC10, TRAPPC11 and TRAPPC12. Heterodimer with TRAPPC6A. The heterodimer TRAPPC3-TRAPPC6A interacts with TRAPPC2L. Heterodimer with TRAPPC6b. The heterodimer TRAPPC6B-TRAPPC3 interacts with TRAPPC1 likely providing a core for TRAPP complex formation. Widely expressed. Expressed in lung, heart, liver, spleen, brain and kidney.

It is found in the golgi apparatus. It localises to the cis-Golgi network. The protein resides in the endoplasmic reticulum. Functionally, may play a role in vesicular transport from endoplasmic reticulum to Golgi. The chain is Trafficking protein particle complex subunit 3 from Mus musculus (Mouse).